The following is a 391-amino-acid chain: UPF0229 protein BCG9842_B4751 (391 aa).

The segment covering 1 to 16 (MGEENQPNYTISQENW) has biased composition (polar residues). Disordered stretches follow at residues 1–31 (MGEE…RHQE) and 80–117 (HVGQ…GDAA). Residues 21 to 31 (KGYDDQQRHQE) are compositionally biased toward basic and acidic residues. Residues 98 to 115 (GSGGQKQKGPGKGQGAGD) are compositionally biased toward gly residues.

The protein belongs to the UPF0229 family.

The sequence is that of UPF0229 protein BCG9842_B4751 from Bacillus cereus (strain G9842).